The sequence spans 204 residues: Methylthioribulose-1-phosphate dehydratase (204 aa).

Zn(2+) contacts are provided by His-94 and His-96.

Belongs to the aldolase class II family. MtnB subfamily. Zn(2+) is required as a cofactor.

The catalysed reaction is 5-(methylsulfanyl)-D-ribulose 1-phosphate = 5-methylsulfanyl-2,3-dioxopentyl phosphate + H2O. Its pathway is amino-acid biosynthesis; L-methionine biosynthesis via salvage pathway; L-methionine from S-methyl-5-thio-alpha-D-ribose 1-phosphate: step 2/6. Catalyzes the dehydration of methylthioribulose-1-phosphate (MTRu-1-P) into 2,3-diketo-5-methylthiopentyl-1-phosphate (DK-MTP-1-P). This chain is Methylthioribulose-1-phosphate dehydratase, found in Pseudomonas syringae pv. tomato (strain ATCC BAA-871 / DC3000).